The following is a 371-amino-acid chain: tRNA-specific 2-thiouridylase MnmA (371 aa).

ATP-binding positions include 13–20 (GMSGGVDS) and methionine 39. The tract at residues 99–101 (NPD) is interaction with target base in tRNA. The active-site Nucleophile is cysteine 104. Residues cysteine 104 and cysteine 200 are joined by a disulfide bond. Glycine 128 contributes to the ATP binding site. The interval 150–152 (KDQ) is interaction with tRNA. Residue cysteine 200 is the Cysteine persulfide intermediate of the active site. An interaction with tRNA region spans residues 308–309 (RY).

The protein belongs to the MnmA/TRMU family.

It is found in the cytoplasm. The enzyme catalyses S-sulfanyl-L-cysteinyl-[protein] + uridine(34) in tRNA + AH2 + ATP = 2-thiouridine(34) in tRNA + L-cysteinyl-[protein] + A + AMP + diphosphate + H(+). Functionally, catalyzes the 2-thiolation of uridine at the wobble position (U34) of tRNA, leading to the formation of s(2)U34. The sequence is that of tRNA-specific 2-thiouridylase MnmA from Bacillus mycoides (strain KBAB4) (Bacillus weihenstephanensis).